The following is a 308-amino-acid chain: 50 kDa gamma-zein (308 aa).

A signal peptide spans 1–19 (MKLVLVVLAFIALVSSVSC). Residues 27 to 159 (CGQQQSHEQQ…QPQQPQQYQQ (133 aa)) are disordered. Positions 55–119 (HHQQQQHQQQ…QHHQQSQGHV (65 aa)) are enriched in low complexity. Residues 120-129 (QQHEQSHEQH) show a composition bias toward basic and acidic residues. The segment covering 130 to 159 (QGQSHEQQHQQQFQGHDKQQQPQQPQQYQQ) has biased composition (low complexity). Cys-286 carries GPI-anchor amidated cysteine lipidation. The propeptide at 287-308 (GLYHSYYQNNPCSSNDISGVCN) is removed in mature form.

Belongs to the gliadin/glutenin family. As to quaternary structure, interacts with OP10 (via N-terminus).

Its subcellular location is the cell membrane. In terms of biological role, zeins are major seed storage proteins. The polypeptide is 50 kDa gamma-zein (Zea mays (Maize)).